A 628-amino-acid polypeptide reads, in one-letter code: Cytoplasmic dynein 1 intermediate chain 1 (628 aa).

Composition is skewed to basic and acidic residues over residues 1–13 (MSDK…ELER) and 20–60 (QIRE…RETE). A disordered region spans residues 1–114 (MSDKSDLKAE…RTLQWDTDPS (114 aa)). Position 2 is an N-acetylserine (Ser-2). A Phosphoserine modification is found at Ser-50. Residues 70–79 (PEPPLVPTPM) are compositionally biased toward pro residues. Low complexity predominate over residues 80 to 90 (SPSSKSVSTPS). Residue Ser-83 is modified to Phosphoserine. Position 88 is a phosphothreonine (Thr-88). Phosphoserine is present on residues Ser-90, Ser-94, and Ser-97. Residues 105-114 (RTLQWDTDPS) are compositionally biased toward polar residues. The interaction with DYNLT1 stretch occupies residues 130 to 146 (KLGVSKVTQVDFLPREV). The tract at residues 152 to 204 (ETQTPLATHQSEEDEEDEEMVEPKIGHDSELENQEKKQETKEAPPRELTEEEK) is disordered. Position 159 is a phosphothreonine (Thr-159). 2 positions are modified to phosphoserine: Ser-162 and Ser-180. Over residues 172–204 (VEPKIGHDSELENQEKKQETKEAPPRELTEEEK) the composition is skewed to basic and acidic residues. WD repeat units lie at residues 268–317 (SKHR…TTPE), 321–361 (HCQS…RTPV), 370–411 (AHTH…TPQE), 420–460 (SKPV…AGIG), 465–510 (GHQG…PLYS), 513–553 (DNAD…EVPT), and 559–598 (EGAS…VPHN). Ser-618 carries the post-translational modification Phosphoserine.

The protein belongs to the dynein intermediate chain family. In terms of assembly, homodimer. The cytoplasmic dynein 1 complex consists of two catalytic heavy chains (HCs) and a number of non-catalytic subunits presented by intermediate chains (ICs), light intermediate chains (LICs) and light chains (LCs); the composition seems to vary in respect to the IC, LIC and LC composition. The heavy chain homodimer serves as a scaffold for the probable homodimeric assembly of the respective non-catalytic subunits. The ICs and LICs bind directly to the HC dimer and the LCs assemble on the IC dimer. Interacts with DYNC1H1. Interacts with DYNLT1 and DYNLT3. Interacts with DCTN1. Interacts with DYNLL2. Interacts with MCRS1; the interaction is required for the proper distribution of centriolar satellites.

The protein resides in the cytoplasm. It localises to the chromosome. Its subcellular location is the centromere. The protein localises to the kinetochore. It is found in the cytoskeleton. The protein resides in the spindle pole. In terms of biological role, acts as one of several non-catalytic accessory components of the cytoplasmic dynein 1 complex that are thought to be involved in linking dynein to cargos and to adapter proteins that regulate dynein function. Cytoplasmic dynein 1 acts as a motor for the intracellular retrograde motility of vesicles and organelles along microtubules. The intermediate chains mediate the binding of dynein to dynactin via its 150 kDa component (p150-glued) DCTN1. May play a role in mediating the interaction of cytoplasmic dynein with membranous organelles and kinetochores. The polypeptide is Cytoplasmic dynein 1 intermediate chain 1 (Dync1i1) (Mus musculus (Mouse)).